The sequence spans 142 residues: Glia maturation factor beta (142 aa).

Serine 2 is subject to N-acetylserine. The region spanning 4–139 is the ADF-H domain; it reads SLVVCDVAED…TEEWLREKLG (136 aa).

It belongs to the actin-binding proteins ADF family. GMF subfamily. In terms of processing, phosphorylated; stimulated by phorbol ester.

This protein causes differentiation of brain cells, stimulation of neural regeneration, and inhibition of proliferation of tumor cells. The protein is Glia maturation factor beta (Gmfb) of Mus musculus (Mouse).